A 410-amino-acid chain; its full sequence is NIPA-like protein 3 (410 aa).

Residues 1–24 (MDGAHSAGLQLQPLPPTSGATSTS) form a disordered region. The next 9 membrane-spanning stretches (helical) occupy residues 37–57 (NLIG…ALNL), 80–100 (WWLG…SYAF), 105–125 (LIVP…IIFI), 139–159 (VLSF…VTFA), 175–195 (LVSW…CLLL), 206–226 (IVVI…TVKA), 244–264 (PIFY…ATFL), 275–295 (LIAS…GAIF), and 304–324 (ALHI…VFLI). Position 376 is a phosphoserine (Ser-376). The segment at 389–410 (EEHSSRSTPGVPYRVLEHTKKE) is disordered.

The protein belongs to the NIPA family.

Its subcellular location is the membrane. The chain is NIPA-like protein 3 (Nipal3) from Mus musculus (Mouse).